Reading from the N-terminus, the 452-residue chain is Maltoporin (452 aa).

Residues 1–25 form the signal peptide; that stretch reads MMITLRKLPLAVAVAAGVMSAQAMA.

Belongs to the porin LamB (TC 1.B.3) family. As to quaternary structure, homotrimer formed of three 18-stranded antiparallel beta-barrels, containing three independent channels.

It localises to the cell outer membrane. The catalysed reaction is beta-maltose(in) = beta-maltose(out). Functionally, involved in the transport of maltose and maltodextrins. The protein is Maltoporin of Salmonella paratyphi A (strain ATCC 9150 / SARB42).